Reading from the N-terminus, the 450-residue chain is UDP-N-acetylmuramoylalanine--D-glutamate ligase (450 aa).

119–125 (GSNGKTT) is an ATP binding site.

This sequence belongs to the MurCDEF family.

The protein localises to the cytoplasm. It carries out the reaction UDP-N-acetyl-alpha-D-muramoyl-L-alanine + D-glutamate + ATP = UDP-N-acetyl-alpha-D-muramoyl-L-alanyl-D-glutamate + ADP + phosphate + H(+). Its pathway is cell wall biogenesis; peptidoglycan biosynthesis. Its function is as follows. Cell wall formation. Catalyzes the addition of glutamate to the nucleotide precursor UDP-N-acetylmuramoyl-L-alanine (UMA). In Streptococcus sanguinis (strain SK36), this protein is UDP-N-acetylmuramoylalanine--D-glutamate ligase.